Consider the following 526-residue polypeptide: GMP synthase [glutamine-hydrolyzing] (526 aa).

The Glutamine amidotransferase type-1 domain maps to 3–199 (RVAIIDFGSQ…FVRIAGCDNN (197 aa)). Residue Cys83 is the Nucleophile of the active site. Active-site residues include His174 and Glu176. Residues 200 to 392 (WTVESFLDEQ…LGISDEILMR (193 aa)) enclose the GMPS ATP-PPase domain. 227 to 233 (SGGVDSS) is an ATP binding site.

Homodimer.

It carries out the reaction XMP + L-glutamine + ATP + H2O = GMP + L-glutamate + AMP + diphosphate + 2 H(+). Its pathway is purine metabolism; GMP biosynthesis; GMP from XMP (L-Gln route): step 1/1. In terms of biological role, catalyzes the synthesis of GMP from XMP. The protein is GMP synthase [glutamine-hydrolyzing] of Ehrlichia chaffeensis (strain ATCC CRL-10679 / Arkansas).